Here is a 200-residue protein sequence, read N- to C-terminus: Ras-related protein RHN1 (200 aa).

GTP-binding positions include 17–25, 36–42, 65–69, 123–126, and 153–155; these read GDMGAGKSS, LEFQEST, DTAGQ, NKAD, and SAK. The Effector region motif lies at 39 to 47; sequence QESTIGAAF. 2 S-geranylgeranyl cysteine lipidation sites follow: cysteine 198 and cysteine 199.

Belongs to the small GTPase superfamily. Rab family. As to expression, high in stem, root, and inflorescence.

The protein localises to the cell membrane. In terms of biological role, protein transport. Probably involved in vesicular traffic. The chain is Ras-related protein RHN1 (RHN1) from Nicotiana plumbaginifolia (Leadwort-leaved tobacco).